Reading from the N-terminus, the 399-residue chain is Elongation factor Tu (399 aa).

The tr-type G domain maps to 10-207; it reads KPHVNVGTIG…ALDSYIPEPV (198 aa). The segment at 19-26 is G1; it reads GHIDHGKT. Residue 19 to 26 coordinates GTP; that stretch reads GHIDHGKT. T26 is a binding site for Mg(2+). Positions 60–64 are G2; the sequence is GITIN. The interval 81–84 is G3; sequence DCPG. Residues 81–85 and 136–139 contribute to the GTP site; these read DCPGH and NKVD. Residues 136-139 are G4; sequence NKVD. Positions 174–176 are G5; sequence SAL.

Belongs to the TRAFAC class translation factor GTPase superfamily. Classic translation factor GTPase family. EF-Tu/EF-1A subfamily. In terms of assembly, monomer.

The protein resides in the cytoplasm. The enzyme catalyses GTP + H2O = GDP + phosphate + H(+). In terms of biological role, GTP hydrolase that promotes the GTP-dependent binding of aminoacyl-tRNA to the A-site of ribosomes during protein biosynthesis. The protein is Elongation factor Tu of Pseudothermotoga lettingae (strain ATCC BAA-301 / DSM 14385 / NBRC 107922 / TMO) (Thermotoga lettingae).